A 243-amino-acid polypeptide reads, in one-letter code: Zinc import ATP-binding protein ZnuC (243 aa).

The 218-residue stretch at 25–242 (LVVDSITLFY…AKFMSVFPEN (218 aa)) folds into the ABC transporter domain. 57–64 (GPNGGGKT) lines the ATP pocket.

The protein belongs to the ABC transporter superfamily. Zinc importer (TC 3.A.1.15.5) family. In terms of assembly, the complex is composed of two ATP-binding proteins (ZnuC), two transmembrane proteins (ZnuB) and a solute-binding protein (ZnuA).

It is found in the cell inner membrane. The enzyme catalyses Zn(2+)(out) + ATP(in) + H2O(in) = Zn(2+)(in) + ADP(in) + phosphate(in) + H(+)(in). In terms of biological role, part of the ABC transporter complex ZnuABC involved in zinc import. Responsible for energy coupling to the transport system. The polypeptide is Zinc import ATP-binding protein ZnuC (Anaplasma phagocytophilum (strain HZ)).